We begin with the raw amino-acid sequence, 173 residues long: Ribosome maturation factor RimM (173 aa).

One can recognise a PRC barrel domain in the interval 97 to 171 (EGEFFYHEII…QITIEPMEGL (75 aa)).

It belongs to the RimM family. In terms of assembly, binds ribosomal protein uS19.

It is found in the cytoplasm. An accessory protein needed during the final step in the assembly of 30S ribosomal subunit, possibly for assembly of the head region. Essential for efficient processing of 16S rRNA. May be needed both before and after RbfA during the maturation of 16S rRNA. It has affinity for free ribosomal 30S subunits but not for 70S ribosomes. This Halalkalibacterium halodurans (strain ATCC BAA-125 / DSM 18197 / FERM 7344 / JCM 9153 / C-125) (Bacillus halodurans) protein is Ribosome maturation factor RimM.